Here is a 337-residue protein sequence, read N- to C-terminus: Ornithine carbamoyltransferase (337 aa).

Residues Ser-56–Thr-59, Gln-83, Arg-107, and His-134–Gln-137 each bind carbamoyl phosphate. L-ornithine is bound by residues Asn-168, Asp-232, and Ser-236 to Met-237. Carbamoyl phosphate-binding positions include Cys-274 to Leu-275 and Arg-320.

This sequence belongs to the aspartate/ornithine carbamoyltransferase superfamily. OTCase family.

The protein resides in the cytoplasm. It carries out the reaction carbamoyl phosphate + L-ornithine = L-citrulline + phosphate + H(+). Its pathway is amino-acid biosynthesis; L-arginine biosynthesis; L-arginine from L-ornithine and carbamoyl phosphate: step 1/3. Its function is as follows. Reversibly catalyzes the transfer of the carbamoyl group from carbamoyl phosphate (CP) to the N(epsilon) atom of ornithine (ORN) to produce L-citrulline. This Shigella flexneri serotype 5b (strain 8401) protein is Ornithine carbamoyltransferase.